The following is a 308-amino-acid chain: Glycine--tRNA ligase alpha subunit (308 aa).

The protein belongs to the class-II aminoacyl-tRNA synthetase family. Tetramer of two alpha and two beta subunits.

Its subcellular location is the cytoplasm. It catalyses the reaction tRNA(Gly) + glycine + ATP = glycyl-tRNA(Gly) + AMP + diphosphate. The chain is Glycine--tRNA ligase alpha subunit from Brucella abortus (strain 2308).